The following is a 215-amino-acid chain: Sodium channel regulatory subunit beta-2 (215 aa).

The N-terminal stretch at methionine 1–serine 29 is a signal peptide. The Extracellular portion of the chain corresponds to methionine 30–threonine 157. The region spanning valine 32 to arginine 154 is the Ig-like C2-type domain. N-linked (GlcNAc...) asparagine glycans are attached at residues asparagine 42, asparagine 66, and asparagine 74. Intrachain disulfides connect cysteine 50–cysteine 127 and cysteine 72–cysteine 75. The helical transmembrane segment at valine 158–valine 179 threads the bilayer. The Cytoplasmic segment spans residues valine 180–lysine 215. Residues lysine 187–lysine 215 form a disordered region. Basic and acidic residues predominate over residues glutamine 189–lysine 215. Phosphoserine is present on serine 192. A Phosphothreonine modification is found at threonine 204.

Belongs to the sodium channel auxiliary subunit SCN2B (TC 8.A.17) family. As to quaternary structure, a voltage-gated sodium (Nav) channel consists of an ion-conducting pore-forming alpha subunit functional on its own that is regulated by one or more beta subunits. The beta subunit SCN2B is disulfide-linked to the pore-forming alpha subunit. Interacts with SCN1A; regulatory subunit of SCN1A/Nav1.1. Interacts with SCN2A; regulatory subunit of SCN2A/Nav1.2. Interacts with SCN3A; regulatory subunit of SCN3A/Nav1.3. Interacts with SCN5A; regulatory subunit of SCN5A/Nav1.5. Interacts with SCN8A; regulatory subunit of SCN8A/Nav1.6. Interacts with SCN9A; regulatory subunit of SCN9A/Nav1.7. Interacts with SCN10A; regulatory subunit of SCN10A/Nav1.8. Interacts with TNR; may play a crucial role in clustering and regulation of activity of SCN2B-containing Nav channels at nodes of Ranvier.

It localises to the cell membrane. Its subcellular location is the cell projection. The protein localises to the axon. Functionally, regulatory subunit of multiple voltage-gated sodium (Nav) channels directly mediating the depolarization of excitable membranes. Navs, also called VGSCs (voltage-gated sodium channels) or VDSCs (voltage-dependent sodium channels), operate by switching between closed and open conformations depending on the voltage difference across the membrane. In the open conformation they allow Na(+) ions to selectively pass through the pore, along their electrochemical gradient. The influx of Na+ ions provokes membrane depolarization, initiating the propagation of electrical signals throughout cells and tissues. The accessory beta subunits participate in localization and functional modulation of the Nav channels. Modulates the activity of SCN1A/Nav1.1, SCN2A/Nav1.2, SCN2A/Nav1.3, SCN5A/Nav1.5, SCN8A/Nav1.6, SCN9A/Nav1.7 and SCN10A/Nav1.8. The protein is Sodium channel regulatory subunit beta-2 of Rattus norvegicus (Rat).